Here is a 258-residue protein sequence, read N- to C-terminus: Glutamate racemase (258 aa).

Residues 11 to 12 (DS) and 43 to 44 (YG) contribute to the substrate site. Cys-74 acts as the Proton donor/acceptor in catalysis. Residue 75 to 76 (NT) coordinates substrate. Cys-187 acts as the Proton donor/acceptor in catalysis. 188 to 189 (TH) lines the substrate pocket.

Belongs to the aspartate/glutamate racemases family.

It catalyses the reaction L-glutamate = D-glutamate. Its pathway is cell wall biogenesis; peptidoglycan biosynthesis. In terms of biological role, provides the (R)-glutamate required for cell wall biosynthesis. The protein is Glutamate racemase of Bifidobacterium adolescentis (strain ATCC 15703 / DSM 20083 / NCTC 11814 / E194a).